We begin with the raw amino-acid sequence, 293 residues long: Probable aspartoacylase (293 aa).

The Zn(2+) site is built by histidine 14 and glutamate 17. Substrate contacts are provided by residues arginine 56 and 63 to 64; that span reads NR. Histidine 106 contributes to the Zn(2+) binding site. Residues glutamate 165 and tyrosine 276 each coordinate substrate.

The protein belongs to the AspA/AstE family. Aspartoacylase subfamily. Zn(2+) serves as cofactor.

It carries out the reaction an N-acyl-L-aspartate + H2O = a carboxylate + L-aspartate. The chain is Probable aspartoacylase from Trichodesmium erythraeum (strain IMS101).